A 669-amino-acid polypeptide reads, in one-letter code: Histone-lysine N-methyltransferase, H3 lysine-9 specific SUVH3 (669 aa).

Disordered regions lie at residues 56–127 (YSSF…EKKT) and 270–290 (ESLIYSGQGGNADKNRQASDQ). 2 stretches are compositionally biased toward polar residues: residues 65–82 (QQPTHDTPDLNQTQNTPI) and 93–107 (RTPTKTNGPSSSSGT). A DNA-binding region (a.T hook) is located at residues 108 to 120 (KRGVGRPKGTTSV). Positions 208 to 355 (GTVPGIEVGD…CNTFKYKLVR (148 aa)) constitute a YDG domain. The Pre-SET domain maps to 430 to 491 (IGCSCSGSCS…SCKNRVIQTG (62 aa)). Zn(2+) contacts are provided by Cys-432, Cys-434, Cys-438, Cys-445, Cys-447, Cys-473, Cys-477, Cys-479, and Cys-483. Residues 494–638 (SRLEVFKTRN…PMAELTYDYG (145 aa)) enclose the SET domain. Residues 504–506 (RGW), Asp-540, Tyr-542, Arg-592, and 595–596 (NH) contribute to the S-adenosyl-L-methionine site. Residues Cys-598, Cys-657, Cys-659, and Cys-664 each coordinate Zn(2+). The region spanning 653-669 (GQRTCLCGSEQCRGSFG) is the Post-SET domain.

Belongs to the class V-like SAM-binding methyltransferase superfamily. Histone-lysine methyltransferase family. Suvar3-9 subfamily. In terms of tissue distribution, expressed in leaves stems and flowers.

It is found in the nucleus. It localises to the chromosome. The protein resides in the centromere. The enzyme catalyses L-lysyl(9)-[histone H3] + S-adenosyl-L-methionine = N(6)-methyl-L-lysyl(9)-[histone H3] + S-adenosyl-L-homocysteine + H(+). Histone methyltransferase. Methylates 'Lys-9' of histone H3. H3 'Lys-9' methylation represents a specific tag for epigenetic transcriptional repression. This Arabidopsis thaliana (Mouse-ear cress) protein is Histone-lysine N-methyltransferase, H3 lysine-9 specific SUVH3 (SUVH3).